The following is a 432-amino-acid chain: Adenylosuccinate lyase (432 aa).

Residues Arg4–Tyr5, Arg67–Asp69, and Thr93–Ser94 contribute to the N(6)-(1,2-dicarboxyethyl)-AMP site. The active-site Proton donor/acceptor is the His141. A N(6)-(1,2-dicarboxyethyl)-AMP-binding site is contributed by Gln212. Ser262 functions as the Proton donor/acceptor in the catalytic mechanism. N(6)-(1,2-dicarboxyethyl)-AMP-binding positions include Ser263, Lys268 to Asn270, Asn276, and Ser307 to Ile311.

It belongs to the lyase 1 family. Adenylosuccinate lyase subfamily. Homodimer and homotetramer. Residues from neighboring subunits contribute catalytic and substrate-binding residues to each active site.

The catalysed reaction is N(6)-(1,2-dicarboxyethyl)-AMP = fumarate + AMP. It catalyses the reaction (2S)-2-[5-amino-1-(5-phospho-beta-D-ribosyl)imidazole-4-carboxamido]succinate = 5-amino-1-(5-phospho-beta-D-ribosyl)imidazole-4-carboxamide + fumarate. Its pathway is purine metabolism; AMP biosynthesis via de novo pathway; AMP from IMP: step 2/2. It functions in the pathway purine metabolism; IMP biosynthesis via de novo pathway; 5-amino-1-(5-phospho-D-ribosyl)imidazole-4-carboxamide from 5-amino-1-(5-phospho-D-ribosyl)imidazole-4-carboxylate: step 2/2. Its function is as follows. Catalyzes two reactions in de novo purine nucleotide biosynthesis. Catalyzes the breakdown of 5-aminoimidazole- (N-succinylocarboxamide) ribotide (SAICAR or 2-[5-amino-1-(5-phospho-beta-D-ribosyl)imidazole-4-carboxamido]succinate) to 5-aminoimidazole-4-carboxamide ribotide (AICAR or 5-amino-1-(5-phospho-beta-D-ribosyl)imidazole-4-carboxamide) and fumarate, and of adenylosuccinate (ADS or N(6)-(1,2-dicarboxyethyl)-AMP) to adenosine monophosphate (AMP) and fumarate. The polypeptide is Adenylosuccinate lyase (purB) (Streptococcus mutans serotype c (strain ATCC 700610 / UA159)).